Here is a 408-residue protein sequence, read N- to C-terminus: Dual-specificity RNA methyltransferase RlmN (408 aa).

The active-site Proton acceptor is Glu120. The Radical SAM core domain occupies 126 to 375 (EEGRGTLCIS…IRTPRGRDIL (250 aa)). A disulfide bridge links Cys133 with Cys378. Residues Cys140, Cys144, and Cys147 each coordinate [4Fe-4S] cluster. Residues 204–205 (GE), Ser236, 258–260 (SLH), and Asn335 each bind S-adenosyl-L-methionine. Cys378 acts as the S-methylcysteine intermediate in catalysis.

This sequence belongs to the radical SAM superfamily. RlmN family. The cofactor is [4Fe-4S] cluster.

It is found in the cytoplasm. It catalyses the reaction adenosine(2503) in 23S rRNA + 2 reduced [2Fe-2S]-[ferredoxin] + 2 S-adenosyl-L-methionine = 2-methyladenosine(2503) in 23S rRNA + 5'-deoxyadenosine + L-methionine + 2 oxidized [2Fe-2S]-[ferredoxin] + S-adenosyl-L-homocysteine. It carries out the reaction adenosine(37) in tRNA + 2 reduced [2Fe-2S]-[ferredoxin] + 2 S-adenosyl-L-methionine = 2-methyladenosine(37) in tRNA + 5'-deoxyadenosine + L-methionine + 2 oxidized [2Fe-2S]-[ferredoxin] + S-adenosyl-L-homocysteine. Functionally, specifically methylates position 2 of adenine 2503 in 23S rRNA and position 2 of adenine 37 in tRNAs. m2A2503 modification seems to play a crucial role in the proofreading step occurring at the peptidyl transferase center and thus would serve to optimize ribosomal fidelity. The sequence is that of Dual-specificity RNA methyltransferase RlmN from Rhizobium leguminosarum bv. trifolii (strain WSM2304).